The primary structure comprises 678 residues: RAS guanyl-releasing protein 4 (678 aa).

2 stretches are compositionally biased toward basic residues: residues 1-10 and 20-32; these read MNRKDIKRKS and GHGR…RHKT. Disordered stretches follow at residues 1-33 and 165-185; these read MNRK…HKTC and GDAS…MSSP. The N-terminal Ras-GEF domain occupies 49 to 175; the sequence is GVLSESSCSV…DASNLLSPGG (127 aa). Residues 201-432 enclose the Ras-GEF domain; that stretch reads ETEELAQHLT…YELSYAREPR (232 aa). The EF-hand domain occupies 466–501; that stretch reads HVEQLVESVFKNYDPEGHGSISLEDFEKLSANFPFA. Residues 540–595 form a Phorbol-ester/DAG-type zinc finger; sequence LHAFQEVTFRKPTFCHSCNGFVSTGPLWGVTKRGYRCQDCGLCCHRHCRDQVRVEC. 2 disordered regions span residues 598–620 and 651–678; these read RPET…LPPT and SSHS…KSSV. Residues 605-619 are compositionally biased toward pro residues; that stretch reads PGPPGAPGPATPLPP.

Belongs to the RASGRP family. In terms of tissue distribution, expressed by mast cells and their progenitors (at protein level).

The protein resides in the cytoplasm. It is found in the cell membrane. In terms of biological role, functions as a cation- and diacylglycerol (DAG)-regulated nucleotide exchange factor activating Ras through the exchange of bound GDP for GTP. In neutrophils, participates in a phospholipase C-activating N-formyl peptide-activated GPCR (G protein-coupled receptor) signaling pathway by promoting Ras-mediated activation of PIK3CG/PI3Kgamma to promote neutrophil functional responses. In CD117(+) dendritic cells and mast cells, participates in an lipopolysaccharide (LPS)-activated signaling pathway that stimulates the production of interferon-gamma and other pro-inflammatory cytokines by natural killer (NK) cells. May function in mast cell differentiation. Does not appear to be required for the development of B-cells, DC-cells, T-cells, or NK-cells. The polypeptide is RAS guanyl-releasing protein 4 (Rasgrp4) (Rattus norvegicus (Rat)).